The primary structure comprises 209 residues: 3-demethoxyubiquinol 3-hydroxylase (209 aa).

Fe cation is bound by residues Glu58, Glu88, His91, Glu140, Glu172, and His175.

The protein belongs to the COQ7 family. Fe cation is required as a cofactor.

It is found in the cell membrane. The enzyme catalyses a 5-methoxy-2-methyl-3-(all-trans-polyprenyl)benzene-1,4-diol + AH2 + O2 = a 3-demethylubiquinol + A + H2O. It participates in cofactor biosynthesis; ubiquinone biosynthesis. Its function is as follows. Catalyzes the hydroxylation of 2-nonaprenyl-3-methyl-6-methoxy-1,4-benzoquinol during ubiquinone biosynthesis. The polypeptide is 3-demethoxyubiquinol 3-hydroxylase (Polaromonas naphthalenivorans (strain CJ2)).